The chain runs to 291 residues: 33 kDa chaperonin (291 aa).

Intrachain disulfides connect Cys-236-Cys-238 and Cys-269-Cys-272.

This sequence belongs to the HSP33 family. Post-translationally, under oxidizing conditions two disulfide bonds are formed involving the reactive cysteines. Under reducing conditions zinc is bound to the reactive cysteines and the protein is inactive.

Its subcellular location is the cytoplasm. Redox regulated molecular chaperone. Protects both thermally unfolding and oxidatively damaged proteins from irreversible aggregation. Plays an important role in the bacterial defense system toward oxidative stress. In Lactobacillus johnsonii (strain CNCM I-12250 / La1 / NCC 533), this protein is 33 kDa chaperonin.